The sequence spans 206 residues: Dephospho-CoA kinase (206 aa).

The DPCK domain maps to 4-200 (TVALTGGIGS…ASYLKLASQF (197 aa)). ATP is bound at residue 12 to 17 (GSGKST).

This sequence belongs to the CoaE family.

The protein localises to the cytoplasm. The catalysed reaction is 3'-dephospho-CoA + ATP = ADP + CoA + H(+). Its pathway is cofactor biosynthesis; coenzyme A biosynthesis; CoA from (R)-pantothenate: step 5/5. Functionally, catalyzes the phosphorylation of the 3'-hydroxyl group of dephosphocoenzyme A to form coenzyme A. This Salmonella paratyphi A (strain ATCC 9150 / SARB42) protein is Dephospho-CoA kinase.